Consider the following 204-residue polypeptide: N-(5'-phosphoribosyl)anthranilate isomerase (204 aa).

The protein belongs to the TrpF family.

The catalysed reaction is N-(5-phospho-beta-D-ribosyl)anthranilate = 1-(2-carboxyphenylamino)-1-deoxy-D-ribulose 5-phosphate. It participates in amino-acid biosynthesis; L-tryptophan biosynthesis; L-tryptophan from chorismate: step 3/5. This Geobacter sp. (strain M21) protein is N-(5'-phosphoribosyl)anthranilate isomerase.